Consider the following 213-residue polypeptide: Ras-related protein Rab-25 (213 aa).

GTP-binding residues include Ser-21, Gly-24, Lys-25, Thr-26, Asn-27, Ser-38, His-39, Thr-43, and Thr-44. A Mg(2+)-binding site is contributed by Thr-26. 2 short sequence motifs (switch) span residues 35–49 and 67–84; these read NEFSHDSRTTIGVEF and DTAGLERYRAITSAYYRG. 2 residues coordinate Mg(2+): Thr-44 and Asp-67. GTP contacts are provided by Gly-70, Asn-125, Lys-126, Asp-128, Ala-156, and Leu-157. 2 S-geranylgeranyl cysteine lipidation sites follow: Cys-209 and Cys-210. Cysteine methyl ester is present on Cys-210. Positions 211 to 213 are cleaved as a propeptide — removed in mature form; it reads ISL.

Belongs to the small GTPase superfamily. Rab family. As to quaternary structure, interacts (GTP-bound form) with RAB11FIP1, RAB11FIP2, RAB11FIP3 and RAB11FIP4. Interacts (via the hypervariable C-terminal region) with ITGB1 (via the cytoplasmic region); the interaction is GTP-dependent. Interacts with ITGAV. Associates with the integrin alpha-V/beta-1 heterodimer. Interacts with VPS33B. Requires Mg(2+) as cofactor.

The protein resides in the cell membrane. The protein localises to the cell projection. Its subcellular location is the pseudopodium membrane. It is found in the cytoplasmic vesicle. The catalysed reaction is GTP + H2O = GDP + phosphate + H(+). Regulated by guanine nucleotide exchange factors (GEFs) which promote the exchange of bound GDP for free GTP. Regulated by GTPase activating proteins (GAPs) which increase the GTP hydrolysis activity. Inhibited by GDP dissociation inhibitors (GDIs) which prevent Rab-GDP dissociation. Functionally, the small GTPases Rab are key regulators of intracellular membrane trafficking, from the formation of transport vesicles to their fusion with membranes. Rabs cycle between an inactive GDP-bound form and an active GTP-bound form that is able to recruit to membranes different set of downstream effectors directly responsible for vesicle formation, movement, tethering and fusion. RAB25 regulates epithelial cell differentiation, proliferation and survival, thereby playing key roles in tumorigenesis. Promotes invasive migration of cells in which it functions to localize and maintain integrin alpha-V/beta-1 at the tips of extending pseudopodia. Involved in the regulation of epithelial morphogenesis through the control of CLDN4 expression and localization at tight junctions. May selectively regulate the apical recycling pathway. Together with MYO5B regulates transcytosis. This chain is Ras-related protein Rab-25 (RAB25), found in Canis lupus familiaris (Dog).